The following is a 143-amino-acid chain: Nucleoside diphosphate kinase (143 aa).

Residues lysine 11, phenylalanine 59, arginine 87, threonine 93, arginine 104, and asparagine 114 each coordinate ATP. Histidine 117 functions as the Pros-phosphohistidine intermediate in the catalytic mechanism.

This sequence belongs to the NDK family. Homotetramer. It depends on Mg(2+) as a cofactor.

It is found in the cytoplasm. It catalyses the reaction a 2'-deoxyribonucleoside 5'-diphosphate + ATP = a 2'-deoxyribonucleoside 5'-triphosphate + ADP. The enzyme catalyses a ribonucleoside 5'-diphosphate + ATP = a ribonucleoside 5'-triphosphate + ADP. Its function is as follows. Major role in the synthesis of nucleoside triphosphates other than ATP. The ATP gamma phosphate is transferred to the NDP beta phosphate via a ping-pong mechanism, using a phosphorylated active-site intermediate. In Alteromonas mediterranea (strain DSM 17117 / CIP 110805 / LMG 28347 / Deep ecotype), this protein is Nucleoside diphosphate kinase.